The sequence spans 147 residues: UPF0179 protein MTH_609 (147 aa).

It belongs to the UPF0179 family.

The chain is UPF0179 protein MTH_609 from Methanothermobacter thermautotrophicus (strain ATCC 29096 / DSM 1053 / JCM 10044 / NBRC 100330 / Delta H) (Methanobacterium thermoautotrophicum).